The sequence spans 208 residues: dITP/XTP pyrophosphatase (208 aa).

16-21 (TGNAGK) contributes to the substrate binding site. 2 residues coordinate Mg(2+): E46 and D75. D75 acts as the Proton acceptor in catalysis. Residues S76, 155–158 (FGYD), K178, and 183–184 (HR) each bind substrate.

This sequence belongs to the HAM1 NTPase family. As to quaternary structure, homodimer. The cofactor is Mg(2+).

It carries out the reaction XTP + H2O = XMP + diphosphate + H(+). The catalysed reaction is dITP + H2O = dIMP + diphosphate + H(+). The enzyme catalyses ITP + H2O = IMP + diphosphate + H(+). Pyrophosphatase that catalyzes the hydrolysis of nucleoside triphosphates to their monophosphate derivatives, with a high preference for the non-canonical purine nucleotides XTP (xanthosine triphosphate), dITP (deoxyinosine triphosphate) and ITP. Seems to function as a house-cleaning enzyme that removes non-canonical purine nucleotides from the nucleotide pool, thus preventing their incorporation into DNA/RNA and avoiding chromosomal lesions. The chain is dITP/XTP pyrophosphatase from Deinococcus deserti (strain DSM 17065 / CIP 109153 / LMG 22923 / VCD115).